The following is a 38-amino-acid chain: Antimicrobial peptide 1 (38 aa).

In terms of processing, disulfide bonds. As to expression, expressed in flowers but not in leaves, seeds or roots (at protein level).

Antimicrobial peptide. Active against fungal species B.cinerea (IC(50)=5.8 uM) and A.niger (IC(50)=5.6 uM) but not against F.oxysporum, F.graminearum, B.sorokinina and P.debaryanum at concentrations below 10 uM. Active against bacterial species P.syringae, B.subtilis and X.campestris. In Taraxacum officinale (Common dandelion), this protein is Antimicrobial peptide 1.